The following is a 457-amino-acid chain: Paired box protein Pax-8 (457 aa).

A DNA-binding region (paired) is located at residues 9-135 (GHGGLNQLGG…SSINRIIRTK (127 aa)). A PAI subdomain region spans residues 12–68 (GLNQLGGAFVNGRPLPEVVRQRIVDLAHQGVRPCDISRQLRVSHGCVSKILGRYYET). Residues 87 to 135 (KVVEKIGDYKRQNPTMFAWEIRDRLLAEGVCDNDTVPSVSSINRIIRTK) are RED subdomain. Over residues 159–182 (LIPSSAVTPPESPQSDSLGSTYSI) the composition is skewed to polar residues. The segment at 159–224 (LIPSSAVTPP…SSSSGPRKHL (66 aa)) is disordered. Position 304 is a phosphoserine (serine 304).

In terms of assembly, interacts with WWTR1. In terms of tissue distribution, expressed in the developing excretory system and the thyroid gland.

The protein localises to the nucleus. Thought to encode a transcription factor. It may have a role in kidney cell differentiation. May play a regulatory role in mammalian development. This chain is Paired box protein Pax-8 (Pax8), found in Mus musculus (Mouse).